We begin with the raw amino-acid sequence, 255 residues long: MAADIRIVPCLTDNFGYLIHDPSSGATASIDAPEAAPLIAALEKEGWKLTDILVTHHHGDHVGGIAELKAKYHCRVVAPHDANAKIADADLRVEEGDVVKVGGLEARVLETPGHTLDHISYVFADDRALFAADTLFSIGCGRVFEGTYPMMWESLLKLRALPDDYKLYCGHEYTASNVKFALTIEPENAALQARAKQVEQQRGAGRPTIPVTLGEEKQANVFLRADVPSVAAAIGFAGESAADVFGELRERKNNS.

His56, His58, Asp60, His61, His114, Asp133, and His171 together coordinate Zn(2+).

Belongs to the metallo-beta-lactamase superfamily. Glyoxalase II family. In terms of assembly, monomer. Zn(2+) serves as cofactor.

It catalyses the reaction an S-(2-hydroxyacyl)glutathione + H2O = a 2-hydroxy carboxylate + glutathione + H(+). It functions in the pathway secondary metabolite metabolism; methylglyoxal degradation; (R)-lactate from methylglyoxal: step 2/2. Its function is as follows. Thiolesterase that catalyzes the hydrolysis of S-D-lactoyl-glutathione to form glutathione and D-lactic acid. The polypeptide is Hydroxyacylglutathione hydrolase (Rhodopseudomonas palustris (strain HaA2)).